We begin with the raw amino-acid sequence, 226 residues long: MLLHIPGLFDADELARICEALERADWADGKVTAGYQSAKAKHNLQLPEGHALAKEIGSALIDRLWKTPRFMSAALPHKVFPPLINCYREGGNFGFHIDNALRQPKGSPERVRTDLSSTLFLSDPESYDGGELVIQDTYGVQQVKLAAGDMVLYPGTSLHKVNPVTRGQRYAAFFWTQSLVRDDSQRTLLFEMDNAIQQLTADVPDHPSLLQLTGTYHNLLRRWAEV.

Residues 78–178 form the Fe2OG dioxygenase domain; sequence KVFPPLINCY…RYAAFFWTQS (101 aa). Fe cation contacts are provided by histidine 96, aspartate 98, and histidine 159. 2-oxoglutarate is bound at residue arginine 169.

It depends on Fe(2+) as a cofactor. The cofactor is L-ascorbate.

The protein is PKHD-type hydroxylase Pput_0892 of Pseudomonas putida (strain ATCC 700007 / DSM 6899 / JCM 31910 / BCRC 17059 / LMG 24140 / F1).